A 432-amino-acid polypeptide reads, in one-letter code: Glutamate-1-semialdehyde 2,1-aminomutase (432 aa).

Position 272 is an N6-(pyridoxal phosphate)lysine (lysine 272).

The protein belongs to the class-III pyridoxal-phosphate-dependent aminotransferase family. HemL subfamily. Homodimer. Pyridoxal 5'-phosphate is required as a cofactor.

It is found in the cytoplasm. The catalysed reaction is (S)-4-amino-5-oxopentanoate = 5-aminolevulinate. The protein operates within porphyrin-containing compound metabolism; protoporphyrin-IX biosynthesis; 5-aminolevulinate from L-glutamyl-tRNA(Glu): step 2/2. It functions in the pathway porphyrin-containing compound metabolism; chlorophyll biosynthesis. The sequence is that of Glutamate-1-semialdehyde 2,1-aminomutase from Trichormus variabilis (strain ATCC 29413 / PCC 7937) (Anabaena variabilis).